Consider the following 614-residue polypeptide: Spastin (614 aa).

The interval 1-45 (MNSPGGRGKKKGSGGPSSPVPPRPPPPCQARSRPAPKPAPPPQSP) is disordered. Positions 1 to 50 (MNSPGGRGKKKGSGGPSSPVPPRPPPPCQARSRPAPKPAPPPQSPHKRNL) are required for nuclear localization. At 1–56 (MNSPGGRGKKKGSGGPSSPVPPRPPPPCQARSRPAPKPAPPPQSPHKRNLYYFSYP) the chain is on the cytoplasmic side. Residues 1–80 (MNSPGGRGKK…LGLLFVWLCQ (80 aa)) form a required for interaction with ATL1 region. The tract at residues 1–192 (MNSPGGRGKK…LVMAKDRLQL (192 aa)) is required for midbody localization. The tract at residues 1-298 (MNSPGGRGKK…STPKTNRTNK (298 aa)) is required for interaction with RTN1. Positions 4–11 (PGGRGKKK) match the Nuclear localization signal motif. Composition is skewed to pro residues over residues 18-28 (SPVPPRPPPPC) and 35-44 (APKPAPPPQS). The interval 50–87 (LYYFSYPLFLGFALLRLVAFHLGLLFVWLCQRFSRALM) is required for interaction with SSNA1 and microtubules. Residues 57 to 77 (LFLGFALLRLVAFHLGLLFVW) constitute an intramembrane region (helical). A Nuclear export signal motif is present at residues 59–67 (LGFALLRLV). The Cytoplasmic portion of the chain corresponds to 78–614 (LCQRFSRALM…WNKDFGDTTV (537 aa)). Positions 110 to 194 (EAERVRAFHK…MAKDRLQLLE (85 aa)) are sufficient for interaction with CHMP1B. Positions 112 to 198 (ERVRAFHKQA…RLQLLEKLQP (87 aa)) are required for interaction with microtubules. The MIT domain maps to 118 to 193 (HKQAFEYISV…VMAKDRLQLL (76 aa)). The tract at residues 220-310 (NGHLQSESGA…TPTTAARKKK (91 aa)) is disordered. The interval 226-614 (ESGAVPKRKD…WNKDFGDTTV (389 aa)) is sufficient for microtubule severing. Phosphoserine is present on residues serine 243 and serine 266. The required for interaction with microtubules and microtubule severing stretch occupies residues 268 to 326 (SGLSMVSGVRQGPGSAAATHKSTPKTNRTNKPSTPTTAARKKKDLKNFRNVDSNLANLI). Residues 287–304 (HKSTPKTNRTNKPSTPTT) show a composition bias toward polar residues. Residue threonine 304 is modified to Phosphothreonine. The Nuclear localization signal signature appears at 307 to 310 (RKKK). 380-387 (GPPGNGKT) contributes to the ATP binding site. The residue at position 595 (serine 595) is a Phosphoserine.

This sequence belongs to the AAA ATPase family. Spastin subfamily. As to quaternary structure, homohexamer. Mostly monomeric, but assembles into hexameric structure for short periods of time. Oligomerization seems to be a prerequisite for catalytic activity. Binding to ATP in a cleft between two adjacent subunits stabilizes the homohexameric form. Binds to microtubules at least in part via the alpha-tubulin and beta-tubulin tails. The hexamer adopts a ring conformation through which microtubules pass prior to being severed. Does not interact strongly with tubulin heterodimers. Interacts (via MIT domain) with CHMP1B; the interaction is direct. Interacts with SSNA1. Interacts with ATL1. Interacts with RTN1. Interacts with ZFYVE27. Interacts with REEP1. Interacts (via MIT domain) with IST1.

It localises to the membrane. It is found in the endoplasmic reticulum. The protein resides in the midbody. The protein localises to the cytoplasm. Its subcellular location is the cytoskeleton. It localises to the microtubule organizing center. It is found in the centrosome. The protein resides in the perinuclear region. The protein localises to the nucleus. Its subcellular location is the spindle. It localises to the cell projection. It is found in the axon. It catalyses the reaction n ATP + n H2O + a microtubule = n ADP + n phosphate + (n+1) alpha/beta tubulin heterodimers.. Allosteric enzyme with a cooperative mechanism; at least two neighbor subunits influence each other strongly in spastin hexamers. Microtubule binding promotes cooperative interactions among spastin subunits. ATP-dependent microtubule severing protein that specifically recognizes and cuts microtubules that are polyglutamylated. Preferentially recognizes and acts on microtubules decorated with short polyglutamate tails: severing activity increases as the number of glutamates per tubulin rises from one to eight, but decreases beyond this glutamylation threshold. Severing activity is not dependent on tubulin acetylation or detyrosination. Microtubule severing promotes reorganization of cellular microtubule arrays and the release of microtubules from the centrosome following nucleation. It is critical for the biogenesis and maintenance of complex microtubule arrays in axons, spindles and cilia. SPAST is involved in abscission step of cytokinesis and nuclear envelope reassembly during anaphase in cooperation with the ESCRT-III complex. Recruited at the midbody, probably by IST1, and participates in membrane fission during abscission together with the ESCRT-III complex. Recruited to the nuclear membrane by IST1 and mediates microtubule severing, promoting nuclear envelope sealing and mitotic spindle disassembly during late anaphase. Required for membrane traffic from the endoplasmic reticulum (ER) to the Golgi and endosome recycling. Recruited by IST1 to endosomes and regulates early endosomal tubulation and recycling by mediating microtubule severing. Probably plays a role in axon growth and the formation of axonal branches. The protein is Spastin of Bos taurus (Bovine).